A 206-amino-acid chain; its full sequence is Large ribosomal subunit protein uL4 (206 aa).

Residues 49-79 (KVKTRSEISRTTKKMYKQKGTGNARHGAASA) form a disordered region.

It belongs to the universal ribosomal protein uL4 family. As to quaternary structure, part of the 50S ribosomal subunit.

In terms of biological role, one of the primary rRNA binding proteins, this protein initially binds near the 5'-end of the 23S rRNA. It is important during the early stages of 50S assembly. It makes multiple contacts with different domains of the 23S rRNA in the assembled 50S subunit and ribosome. Functionally, forms part of the polypeptide exit tunnel. In Methylobacterium sp. (strain 4-46), this protein is Large ribosomal subunit protein uL4.